The following is a 344-amino-acid chain: UDP-glucose 4-epimerase (344 aa).

Residues 15 to 17 (GYI), 36 to 40 (DNLSN), 63 to 64 (DI), Phe-85, and Lys-89 contribute to the NAD(+) site. Substrate is bound at residue 129-131 (SAT). Tyr-153 (proton acceptor) is an active-site residue. NAD(+) contacts are provided by Lys-157 and Tyr-181. Substrate-binding positions include 181–183 (YFN), 202–204 (NNL), 220–222 (SIF), Arg-235, and 297–300 (RKGD).

This sequence belongs to the NAD(P)-dependent epimerase/dehydratase family. In terms of assembly, homodimer. It depends on NAD(+) as a cofactor.

It carries out the reaction UDP-alpha-D-glucose = UDP-alpha-D-galactose. The enzyme catalyses UDP-N-acetyl-alpha-D-glucosamine = UDP-N-acetyl-alpha-D-galactosamine. It functions in the pathway carbohydrate metabolism; galactose metabolism. Functionally, catalyzes two distinct but analogous reactions: the reversible epimerization of UDP-glucose to UDP-galactose and the reversible epimerization of UDP-N-acetylglucosamine to UDP-N-acetylgalactosamine. The reaction with UDP-Gal plays a critical role in the Leloir pathway of galactose catabolism in which galactose is converted to the glycolytic intermediate glucose 6-phosphate. It contributes to the catabolism of dietary galactose and enables the endogenous biosynthesis of both UDP-Gal and UDP-GalNAc when exogenous sources are limited. Both UDP-sugar interconversions are important in the synthesis of glycoproteins and glycolipids. The protein is UDP-glucose 4-epimerase (galE) of Dictyostelium discoideum (Social amoeba).